We begin with the raw amino-acid sequence, 239 residues long: tRNA (guanine-N(1)-)-methyltransferase (239 aa).

S-adenosyl-L-methionine-binding positions include Gly115 and 134-139; that span reads MGDFVL. The tract at residues 210–239 is disordered; that stretch reads QQQREQRTQERRPDLWNRWQQIQNPTPPAP. The segment covering 211 to 224 has biased composition (basic and acidic residues); sequence QQREQRTQERRPDL.

The protein belongs to the RNA methyltransferase TrmD family. In terms of assembly, homodimer.

It localises to the cytoplasm. The catalysed reaction is guanosine(37) in tRNA + S-adenosyl-L-methionine = N(1)-methylguanosine(37) in tRNA + S-adenosyl-L-homocysteine + H(+). Specifically methylates guanosine-37 in various tRNAs. This Synechococcus sp. (strain CC9311) protein is tRNA (guanine-N(1)-)-methyltransferase.